A 1935-amino-acid chain; its full sequence is Myosin heavy chain, fast skeletal muscle (1935 aa).

A Myosin N-terminal SH3-like domain is found at 32 to 81; it reads DAKTAFFVVDPDEMYLKGTLVSKEGGKATVKTHSGKTVTVKEDEIFPMNP. The region spanning 85–779 is the Myosin motor domain; it reads DKIEDMAMMT…LLGALEEMRD (695 aa). K129 bears the N6,N6,N6-trimethyllysine mark. Residue 178 to 185 participates in ATP binding; the sequence is GESGAGKT. Actin-binding regions lie at residues 659-681 and 761-775; these read LMTN…ESKT and HTKV…GALE. Positions 782–811 constitute an IQ domain; that stretch reads LALLVTMTQALCRGYVMRKEFVKMMERRES. Positions 812–839 are hinge; that stretch reads IYSIQYNIRSFMNVKHWPWMKLYFKIKP. Residues 840–1935 adopt a coiled-coil conformation; it reads LLKSAETEKE…RDAGKSKDEE (1096 aa). Disordered stretches follow at residues 1589-1608 and 1902-1935; these read RNSQ…EVRS and HELE…KDEE. The segment covering 1592-1603 has biased composition (polar residues); that stretch reads QRVIDSMQSTLD. Basic and acidic residues-rich tracts occupy residues 1902 to 1913 and 1924 to 1935; these read HELEEAQERADV and KSRDAGKSKDEE.

This sequence belongs to the TRAFAC class myosin-kinesin ATPase superfamily. Myosin family. Muscle myosin is a hexameric protein that consists of 2 heavy chain subunits (MHC), 2 alkali light chain subunits (MLC) and 2 regulatory light chain subunits (MLC-2).

It is found in the cytoplasm. The protein localises to the myofibril. Functionally, muscle contraction. This chain is Myosin heavy chain, fast skeletal muscle, found in Cyprinus carpio (Common carp).